A 355-amino-acid polypeptide reads, in one-letter code: Endonuclease III homolog (355 aa).

A Nuclear localization signal motif is present at residues 44–50 (PKKFRFQ). One can recognise a HhH domain in the interval 122 to 149 (FQGDIPDTVEDLMTLPGVGPKMGYLCMS). Lys142 acts as the Nucleophile; for N-glycosylase activity in catalysis. Residues Cys210, Cys217, Cys220, and Cys228 each coordinate [4Fe-4S] cluster. Residues 252 to 255 (KKRP) carry the Nuclear localization signal motif. Residues 303–355 (KEPAADIDVDQKPPVAFHSTTKETRSLRRSKRVAKKSSQYFSQQSLQDIEDLV) form a disordered region. The segment covering 338–349 (KSSQYFSQQSLQ) has biased composition (polar residues).

The protein belongs to the Nth/MutY family. It depends on [4Fe-4S] cluster as a cofactor.

The protein localises to the nucleus. The protein resides in the mitochondrion. The catalysed reaction is 2'-deoxyribonucleotide-(2'-deoxyribose 5'-phosphate)-2'-deoxyribonucleotide-DNA = a 3'-end 2'-deoxyribonucleotide-(2,3-dehydro-2,3-deoxyribose 5'-phosphate)-DNA + a 5'-end 5'-phospho-2'-deoxyribonucleoside-DNA + H(+). Functionally, bifunctional DNA N-glycosylase with associated apurinic/apyrimidinic (AP) lyase function that catalyzes the first step in base excision repair (BER), the primary repair pathway for the repair of oxidative DNA damage. The DNA N-glycosylase activity releases the damaged DNA base from DNA by cleaving the N-glycosidic bond, leaving an AP site. The AP-lyase activity cleaves the phosphodiester bond 3' to the AP site by a beta-elimination. Primarily recognizes and repairs oxidative base damage of pyrimidines. Also has 8-oxo-7,8-dihydroguanine (8-oxoG) DNA glycosylase activity. Also involved in the repair of 7-methylguanine lesions, although it cannot directly repair alkylated DNA bases. Probably does so via excision of methylformamidopyrimidine (mFapy) lesions, a spontaneous processing product of 7-methylguanine. The chain is Endonuclease III homolog (nth1) from Schizosaccharomyces pombe (strain 972 / ATCC 24843) (Fission yeast).